The following is a 101-amino-acid chain: Large ribosomal subunit protein uL24 (101 aa).

It belongs to the universal ribosomal protein uL24 family. Part of the 50S ribosomal subunit.

One of two assembly initiator proteins, it binds directly to the 5'-end of the 23S rRNA, where it nucleates assembly of the 50S subunit. In terms of biological role, one of the proteins that surrounds the polypeptide exit tunnel on the outside of the subunit. The sequence is that of Large ribosomal subunit protein uL24 from Streptococcus suis (strain 98HAH33).